The chain runs to 349 residues: Variable large protein 19 (349 aa).

The N-terminal stretch at 1–18 (MRKRISAIIMTLFMVLVS) is a signal peptide. The N-palmitoyl cysteine moiety is linked to residue Cys19. A lipid anchor (S-diacylglycerol cysteine) is attached at Cys19.

Belongs to the variable large protein (Vlp) family. Gamma subfamily.

The protein resides in the cell outer membrane. Its function is as follows. The Vlp and Vsp proteins are antigenically distinct proteins, only one vlp or vsp gene is transcriptionally active at any one time. Switching between these genes is a mechanism of host immune response evasion. The sequence is that of Variable large protein 19 from Borrelia hermsii.